The following is a 315-amino-acid chain: Ribosomal RNA small subunit methyltransferase H (315 aa).

Residues 37-39, aspartate 57, phenylalanine 83, aspartate 105, and glutamine 112 contribute to the S-adenosyl-L-methionine site; that span reads GGH.

It belongs to the methyltransferase superfamily. RsmH family.

The protein resides in the cytoplasm. The catalysed reaction is cytidine(1402) in 16S rRNA + S-adenosyl-L-methionine = N(4)-methylcytidine(1402) in 16S rRNA + S-adenosyl-L-homocysteine + H(+). Specifically methylates the N4 position of cytidine in position 1402 (C1402) of 16S rRNA. This is Ribosomal RNA small subunit methyltransferase H from Pseudomonas fluorescens (strain ATCC BAA-477 / NRRL B-23932 / Pf-5).